A 420-amino-acid chain; its full sequence is MRSHLVKPGSVYDGIEPGELGETTESVQDRVRQLESRNSFLEEQCSQIESEKRYLENQKIKYEREIRKLQSELDRMKTSPLIIGTVIDVIKNDRIIVRSSNGPQFLVNVSQYIDEKKLLPGAKVALNQHTLAIAEVIPSTEEPFVAAMEVIESVEVDYDQIGGLDEQIQELQEAVELPLTSPERFARIGIEPPKGVLLYGLPGTGKTLLAKAVAHRTNATFIRVVGSELVQKYIGDGSKLVREIFEMARKKAPSIIFIDELDSIAARRLNETTGADREVQRTLMQLLAEMDGFDKRKNIRIIAATNRPDVLDPAILRPGRFDRLVHVPMPGIEARGKILKIHCEKMTLAEDIDFKKLAKATEGMSGADLKAIATEAGMFAVRRDKELVEMEEFLEAVEKVSMAADTQKMMPSNLPETMFV.

Residues 1-25 (MRSHLVKPGSVYDGIEPGELGETTE) form a disordered region. Residues 22 to 79 (ETTESVQDRVRQLESRNSFLEEQCSQIESEKRYLENQKIKYEREIRKLQSELDRMKTS) are a coiled coil. ATP-binding positions include 203–208 (GTGKTL) and histidine 342. Residues 418–420 (MFV) form a docks into pockets in the proteasome alpha-ring to cause gate opening region.

This sequence belongs to the AAA ATPase family. As to quaternary structure, homohexamer. The hexameric complex has a two-ring architecture resembling a top hat that caps the 20S proteasome core at one or both ends. Upon ATP-binding, the C-terminus of PAN interacts with the alpha-rings of the proteasome core by binding to the intersubunit pockets.

It is found in the cytoplasm. Its function is as follows. ATPase which is responsible for recognizing, binding, unfolding and translocation of substrate proteins into the archaeal 20S proteasome core particle. Is essential for opening the gate of the 20S proteasome via an interaction with its C-terminus, thereby allowing substrate entry and access to the site of proteolysis. Thus, the C-termini of the proteasomal ATPase function like a 'key in a lock' to induce gate opening and therefore regulate proteolysis. Unfolding activity requires energy from ATP hydrolysis, whereas ATP binding alone promotes ATPase-20S proteasome association which triggers gate opening, and supports translocation of unfolded substrates. This chain is Proteasome-activating nucleotidase, found in Methanosarcina mazei (strain ATCC BAA-159 / DSM 3647 / Goe1 / Go1 / JCM 11833 / OCM 88) (Methanosarcina frisia).